Reading from the N-terminus, the 75-residue chain is Veswaprin-b (75 aa).

A signal peptide spans 1–24 (MSSGGLLLLLGLLTLWAELTPISG). A disordered region spans residues 23–42 (SGQDRPKKPGLRPPRPQKPP). The WAP; atypical domain maps to 27 to 72 (RPKKPGLRPPRPQKPPCVRECKNDWRCPGEQKCCRYGCIYECRDPI). 3 cysteine pairs are disulfide-bonded: C43/C64, C47/C59, and C53/C68.

It belongs to the venom waprin family. In terms of tissue distribution, expressed by the venom gland.

The protein resides in the secreted. Damages membranes of susceptible bacteria. Has no hemolytic activity. Not toxic to mice. Does not inhibit the proteinases elastase and cathepsin G. The polypeptide is Veswaprin-b (Demansia vestigiata (Lesser black whip snake)).